Reading from the N-terminus, the 123-residue chain is Protein LLP homolog (123 aa).

Residues 1 to 21 show a composition bias toward basic residues; the sequence is MAKSLRSKWKRKMRAEKRKKN. Disordered stretches follow at residues 1–22 and 61–123; these read MAKSLRSKWKRKMRAEKRKKNA and DLDV…KLAW. Over residues 70-89 the composition is skewed to basic and acidic residues; the sequence is ESSKMDTELKRNKKNLRDQH. Over residues 100–123 the composition is skewed to basic residues; the sequence is QQKKLKSQCGKKKGKSKQAKKLAW.

The protein belongs to the learning-associated protein family.

It is found in the nucleus. It localises to the nucleolus. Its subcellular location is the chromosome. In terms of biological role, regulates dendritic and spine growth and synaptic transmission. In Xenopus laevis (African clawed frog), this protein is Protein LLP homolog (llph).